The primary structure comprises 566 residues: Urease subunit alpha (566 aa).

Residues 128 to 566 form the Urease domain; sequence GGVDTHIHFI…LPMAQRYFLF (439 aa). H133, H135, and K216 together coordinate Ni(2+). K216 is subject to N6-carboxylysine. H218 is a binding site for substrate. Ni(2+) contacts are provided by H245 and H271. H319 functions as the Proton donor in the catalytic mechanism. Ni(2+) is bound at residue D359.

It belongs to the metallo-dependent hydrolases superfamily. Urease alpha subunit family. In terms of assembly, may form a heterohexamer of 3 UreC (alpha) and 3 UreAB (gamma/beta) subunits. May also form a heterotrimer of UreA (gamma), UreB (beta) and UreC (alpha) subunits. Three heterotrimers associate to form the active enzyme. It depends on Ni cation as a cofactor. Carboxylation allows a single lysine to coordinate two nickel ions.

Its subcellular location is the cytoplasm. The enzyme catalyses urea + 2 H2O + H(+) = hydrogencarbonate + 2 NH4(+). Its pathway is nitrogen metabolism; urea degradation; CO(2) and NH(3) from urea (urease route): step 1/1. This chain is Urease subunit alpha, found in Pseudomonas syringae pv. tomato (strain ATCC BAA-871 / DC3000).